Consider the following 494-residue polypeptide: Aspartyl/glutamyl-tRNA(Asn/Gln) amidotransferase subunit B (494 aa).

The protein belongs to the GatB/GatE family. GatB subfamily. Heterotrimer of A, B and C subunits.

The catalysed reaction is L-glutamyl-tRNA(Gln) + L-glutamine + ATP + H2O = L-glutaminyl-tRNA(Gln) + L-glutamate + ADP + phosphate + H(+). It catalyses the reaction L-aspartyl-tRNA(Asn) + L-glutamine + ATP + H2O = L-asparaginyl-tRNA(Asn) + L-glutamate + ADP + phosphate + 2 H(+). Its function is as follows. Allows the formation of correctly charged Asn-tRNA(Asn) or Gln-tRNA(Gln) through the transamidation of misacylated Asp-tRNA(Asn) or Glu-tRNA(Gln) in organisms which lack either or both of asparaginyl-tRNA or glutaminyl-tRNA synthetases. The reaction takes place in the presence of glutamine and ATP through an activated phospho-Asp-tRNA(Asn) or phospho-Glu-tRNA(Gln). In Nitrobacter winogradskyi (strain ATCC 25391 / DSM 10237 / CIP 104748 / NCIMB 11846 / Nb-255), this protein is Aspartyl/glutamyl-tRNA(Asn/Gln) amidotransferase subunit B.